A 289-amino-acid polypeptide reads, in one-letter code: MDDKSMARGRKAFVTGFPIRHSRSPLIHGFWLKELGIDGSYEAVEVKPEDFSSFAASLAANGFAGGNVTIPHKEAAYAAAESLDEAARAIGAVNTLWLENGRLCGGNTDAYGFAANLDASAPGWDKADRALVLGAGGASRAVVHALLSRGVCHVSVVNRTLSRAEELAAHFGARVYAHSWDEAQALVSNAGLIVNTTALGMSGHGEGQDFPIDLTCAPKEAVATDIVYVPLRTAFLNKAEKAGLKTVDGLGMLLHQAVPGFERWFGQRPQVTQALREHILADMAKAGAL.

Shikimate contacts are provided by residues 22–24 (SRS) and T69. K73 acts as the Proton acceptor in catalysis. E85 serves as a coordination point for NADP(+). Positions 94 and 109 each coordinate shikimate. Residues 134 to 138 (GAGGA), 158 to 163 (NRTLSR), and I226 each bind NADP(+). A shikimate-binding site is contributed by Y228. G249 is a binding site for NADP(+).

Belongs to the shikimate dehydrogenase family. In terms of assembly, homodimer.

It carries out the reaction shikimate + NADP(+) = 3-dehydroshikimate + NADPH + H(+). Its pathway is metabolic intermediate biosynthesis; chorismate biosynthesis; chorismate from D-erythrose 4-phosphate and phosphoenolpyruvate: step 4/7. Involved in the biosynthesis of the chorismate, which leads to the biosynthesis of aromatic amino acids. Catalyzes the reversible NADPH linked reduction of 3-dehydroshikimate (DHSA) to yield shikimate (SA). The protein is Shikimate dehydrogenase (NADP(+)) of Brucella abortus (strain S19).